A 221-amino-acid polypeptide reads, in one-letter code: Large ribosomal subunit protein bL25 (221 aa).

The interval 192 to 221 (APRVEKEETEEDTVAPGDVPAENSKDADEE) is disordered.

This sequence belongs to the bacterial ribosomal protein bL25 family. CTC subfamily. In terms of assembly, part of the 50S ribosomal subunit; part of the 5S rRNA/L5/L18/L25 subcomplex. Contacts the 5S rRNA. Binds to the 5S rRNA independently of L5 and L18.

This is one of the proteins that binds to the 5S RNA in the ribosome where it forms part of the central protuberance. The protein is Large ribosomal subunit protein bL25 of Idiomarina loihiensis (strain ATCC BAA-735 / DSM 15497 / L2-TR).